Consider the following 225-residue polypeptide: 7-cyano-7-deazaguanine synthase (225 aa).

Position 8-18 (8-18) interacts with ATP; sequence VSGGADSATVL. Zn(2+) is bound by residues Cys-188, Cys-198, Cys-201, and Cys-204.

This sequence belongs to the QueC family. The cofactor is Zn(2+).

The catalysed reaction is 7-carboxy-7-deazaguanine + NH4(+) + ATP = 7-cyano-7-deazaguanine + ADP + phosphate + H2O + H(+). It functions in the pathway purine metabolism; 7-cyano-7-deazaguanine biosynthesis. Its function is as follows. Catalyzes the ATP-dependent conversion of 7-carboxy-7-deazaguanine (CDG) to 7-cyano-7-deazaguanine (preQ(0)). The chain is 7-cyano-7-deazaguanine synthase from Rickettsia bellii (strain OSU 85-389).